We begin with the raw amino-acid sequence, 106 residues long: ATP-dependent Clp protease adapter protein ClpS (106 aa).

The protein belongs to the ClpS family. As to quaternary structure, binds to the N-terminal domain of the chaperone ClpA.

Involved in the modulation of the specificity of the ClpAP-mediated ATP-dependent protein degradation. This is ATP-dependent Clp protease adapter protein ClpS from Aliivibrio fischeri (strain ATCC 700601 / ES114) (Vibrio fischeri).